A 539-amino-acid polypeptide reads, in one-letter code: Peptide chain release factor 3 (539 aa).

In terms of domain architecture, tr-type G spans 14 to 283; sequence EKRRNFAIIS…AFLEYALQPE (270 aa). GTP-binding positions include 23-30, 91-95, and 145-148; these read SHPDAGKT, DTPGH, and NKLD.

Belongs to the TRAFAC class translation factor GTPase superfamily. Classic translation factor GTPase family. PrfC subfamily.

The protein localises to the cytoplasm. In terms of biological role, increases the formation of ribosomal termination complexes and stimulates activities of RF-1 and RF-2. It binds guanine nucleotides and has strong preference for UGA stop codons. It may interact directly with the ribosome. The stimulation of RF-1 and RF-2 is significantly reduced by GTP and GDP, but not by GMP. The polypeptide is Peptide chain release factor 3 (Rippkaea orientalis (strain PCC 8801 / RF-1) (Cyanothece sp. (strain PCC 8801))).